Consider the following 276-residue polypeptide: Tryptophan synthase alpha chain (276 aa).

Active-site proton acceptor residues include glutamate 46 and glutamate 57.

Belongs to the TrpA family. In terms of assembly, tetramer of two alpha and two beta chains.

It carries out the reaction (1S,2R)-1-C-(indol-3-yl)glycerol 3-phosphate + L-serine = D-glyceraldehyde 3-phosphate + L-tryptophan + H2O. It participates in amino-acid biosynthesis; L-tryptophan biosynthesis; L-tryptophan from chorismate: step 5/5. Its function is as follows. The alpha subunit is responsible for the aldol cleavage of indoleglycerol phosphate to indole and glyceraldehyde 3-phosphate. The sequence is that of Tryptophan synthase alpha chain from Halobacterium salinarum (strain ATCC 29341 / DSM 671 / R1).